We begin with the raw amino-acid sequence, 206 residues long: Outer-membrane lipoprotein carrier protein (206 aa).

Residues 1 to 20 (MRLIRMLLPVLALTTLTAHA) form the signal peptide.

This sequence belongs to the LolA family. As to quaternary structure, monomer.

The protein localises to the periplasm. In terms of biological role, participates in the translocation of lipoproteins from the inner membrane to the outer membrane. Only forms a complex with a lipoprotein if the residue after the N-terminal Cys is not an aspartate (The Asp acts as a targeting signal to indicate that the lipoprotein should stay in the inner membrane). This is Outer-membrane lipoprotein carrier protein from Pseudomonas fluorescens (strain Pf0-1).